We begin with the raw amino-acid sequence, 132 residues long: Large ribosomal subunit protein bL12 (132 aa).

The protein belongs to the bacterial ribosomal protein bL12 family. Homodimer. Part of the ribosomal stalk of the 50S ribosomal subunit. Forms a multimeric L10(L12)X complex, where L10 forms an elongated spine to which 2 to 4 L12 dimers bind in a sequential fashion. Binds GTP-bound translation factors.

Its function is as follows. Forms part of the ribosomal stalk which helps the ribosome interact with GTP-bound translation factors. Is thus essential for accurate translation. This chain is Large ribosomal subunit protein bL12, found in Chloroflexus aurantiacus (strain ATCC 29366 / DSM 635 / J-10-fl).